A 445-amino-acid chain; its full sequence is Inositol-pentakisphosphate 2-kinase IPK1 (445 aa).

ATP is bound by residues 19-22 (GAAN) and Arg-40. Arg-127 contributes to the substrate binding site. ATP contacts are provided by residues 144 to 146 (SDH) and 162 to 164 (EIK). The EXKPK motif motif lies at 162–166 (EIKAK). Positions 166, 196, and 234 each coordinate substrate. An ATP-binding site is contributed by Arg-237. Residues His-312, Cys-322, Cys-325, and His-341 each coordinate Zn(2+). Asp-363 is a binding site for substrate. Residue Asp-402 coordinates ATP. The substrate site is built by Lys-406, Lys-410, and Tyr-414.

This sequence belongs to the IPK1 type 2 family. It depends on Zn(2+) as a cofactor.

The enzyme catalyses 1D-myo-inositol 1,3,4,5,6-pentakisphosphate + ATP = 1D-myo-inositol hexakisphosphate + ADP + H(+). Its function is as follows. Phosphorylates Ins(1,3,4,5,6)P5 at position 2 to form Ins(1,2,3,4,5,6)P6 (InsP6 or phytate). Phytate is a regulator of intracellular signaling, a highly abundant animal antinutrient, and a phosphate store in plant seeds. Also phosphorylates Ins(1,3,4,6)P4 and Ins(1,4,5,6)P4 to produce Ins(1,2,3,4,6)P5 and Ins(1,2,4,5,6)P5. In Oryza sativa subsp. indica (Rice), this protein is Inositol-pentakisphosphate 2-kinase IPK1.